The following is a 242-amino-acid chain: MNLIIDIGNSVAKLAIFDKGELVEVFRGSNHSLDCLPMLCSRYPLKRGIIASVITLSNTIRHQLERLPFNIIELSHETPVPVTNLYKTPQTLGMDRLAAVVAANWLKPGHDVLVIDAGTCVTYDFIDADGAYHGGNISPGMRMRFKALNIFTDKLPKVSAKGEVPMYGQSTETAIRAGVIRGMEFEMSGYITHLQKNYPELLVFLTGGDEFSFDTKLKSIIFADRFLVLKGLNRILSYNDKL.

6 to 13 (DIGNSVAK) serves as a coordination point for ATP. Substrate is bound by residues tyrosine 86 and 93–96 (GMDR). Aspartate 95 functions as the Proton acceptor in the catalytic mechanism. Aspartate 116 contributes to the K(+) binding site. Threonine 119 is a binding site for ATP. Position 171 (threonine 171) interacts with substrate.

This sequence belongs to the type III pantothenate kinase family. Homodimer. NH4(+) is required as a cofactor. It depends on K(+) as a cofactor.

It localises to the cytoplasm. It carries out the reaction (R)-pantothenate + ATP = (R)-4'-phosphopantothenate + ADP + H(+). It functions in the pathway cofactor biosynthesis; coenzyme A biosynthesis; CoA from (R)-pantothenate: step 1/5. In terms of biological role, catalyzes the phosphorylation of pantothenate (Pan), the first step in CoA biosynthesis. This chain is Type III pantothenate kinase, found in Phocaeicola vulgatus (strain ATCC 8482 / DSM 1447 / JCM 5826 / CCUG 4940 / NBRC 14291 / NCTC 11154) (Bacteroides vulgatus).